The sequence spans 113 residues: Probable 4-amino-4-deoxy-L-arabinose-phosphoundecaprenol flippase subunit ArnE (113 aa).

Helical transmembrane passes span Ser37–Leu57, Ile62–Ala82, and Ala91–Leu111. The 67-residue stretch at Ala45–Leu111 folds into the EamA domain.

It belongs to the ArnE family. In terms of assembly, heterodimer of ArnE and ArnF.

It localises to the cell inner membrane. Its pathway is bacterial outer membrane biogenesis; lipopolysaccharide biosynthesis. In terms of biological role, translocates 4-amino-4-deoxy-L-arabinose-phosphoundecaprenol (alpha-L-Ara4N-phosphoundecaprenol) from the cytoplasmic to the periplasmic side of the inner membrane. This is Probable 4-amino-4-deoxy-L-arabinose-phosphoundecaprenol flippase subunit ArnE from Photorhabdus laumondii subsp. laumondii (strain DSM 15139 / CIP 105565 / TT01) (Photorhabdus luminescens subsp. laumondii).